Reading from the N-terminus, the 336-residue chain is Cycloartenol-C-24-methyltransferase (336 aa).

An N-acetylmethionine modification is found at Met1.

Belongs to the class I-like SAM-binding methyltransferase superfamily. Erg6/SMT family. Highly expressed in vascular tissue, mature leaves and in regions undergoing cellular expansion.

The enzyme catalyses cycloartenol + S-adenosyl-L-methionine = 24-methylenecycloartanol + S-adenosyl-L-homocysteine + H(+). It participates in steroid biosynthesis; sterol biosynthesis. Its function is as follows. Catalyzes the methyl transfer from S-adenosyl-methionine to the C-24 of cycloartenol to form 24-methylene cycloartenol. This chain is Cycloartenol-C-24-methyltransferase (SMT1), found in Arabidopsis thaliana (Mouse-ear cress).